Here is a 215-residue protein sequence, read N- to C-terminus: MYGKSPALVLPLLLSLQLTALCPTEAVEIYTSGALEAVNGTDVRLKCTFSSFAPVGDALTVTWNFRPRDGGREQFVFYYHMDPFRPMSGRFKDRVVWDGNPERYDVSILLWKLQFDDNGTYTCQVKNPPDVDGLVGTIRLSVVHTVPFSEIYFLAVAIGSACALMIIVVIVVVLFQHFRKKRWADRADKAEGTKSKEEEKLNQGNKVSVFVEDTD.

The N-terminal stretch at 1–26 (MYGKSPALVLPLLLSLQLTALCPTEA) is a signal peptide. The Ig-like V-type domain occupies 27–141 (VEIYTSGALE…DGLVGTIRLS (115 aa)). The Extracellular portion of the chain corresponds to 27–154 (VEIYTSGALE…TVPFSEIYFL (128 aa)). Residues Asn-39 and Asn-118 are each glycosylated (N-linked (GlcNAc...) asparagine). The cysteines at positions 47 and 123 are disulfide-linked. Residues 155 to 175 (AVAIGSACALMIIVVIVVVLF) form a helical membrane-spanning segment. The Cytoplasmic segment spans residues 176-215 (QHFRKKRWADRADKAEGTKSKEEEKLNQGNKVSVFVEDTD). Positions 187-201 (ADKAEGTKSKEEEKL) are enriched in basic and acidic residues. The interval 187-215 (ADKAEGTKSKEEEKLNQGNKVSVFVEDTD) is disordered.

The protein belongs to the myelin P0 protein family. In terms of tissue distribution, widely expressed. Expressed in the cochlea, in Deiters' cells, possibly at contact sites with the basilar membrane. Expressed in both outer and inner auditory hair cells. In the stria vascularis, detected in the basal cell layer. Not detected in thymocytes, lymphocytes, macrophage or dendritic cells.

Its subcellular location is the membrane. Functionally, mediates homophilic cell-cell adhesion. The sequence is that of Myelin protein zero-like protein 2 (Mpzl2) from Mus musculus (Mouse).